The following is a 183-amino-acid chain: MSSLIVKSLGSIVSIIARIFFFRRSRPVSNPRTTAHISYFRMSRKRPLSLQTVELKVRMCCTGCVRIVRNAISKLRGVDSVEVDKELGRVRVVGYVDRNKVLKAVRRAGKRAEFSPYPEPPLYFTSTQNYFVDPSKEFKESYNYYRHGYNGTEQHGNIPVGSRGDDRVSNMFNDDNVNACRLM.

Residues 50–113 (LQTVELKVRM…AVRRAGKRAE (64 aa)) enclose the HMA domain. 2 residues coordinate a metal cation: Cys61 and Cys64. Cys180 carries the cysteine methyl ester modification. Cys180 carries S-farnesyl cysteine lipidation. The propeptide at 181–183 (RLM) is removed in mature form.

Belongs to the HIPP family.

Its function is as follows. Heavy-metal-binding protein. The sequence is that of Heavy metal-associated isoprenylated plant protein 44 from Arabidopsis thaliana (Mouse-ear cress).